We begin with the raw amino-acid sequence, 181 residues long: Large ribosomal subunit protein uL5c (181 aa).

This sequence belongs to the universal ribosomal protein uL5 family. As to quaternary structure, part of the 50S ribosomal subunit; contacts the 5S rRNA.

It localises to the plastid. The protein localises to the chloroplast. Its function is as follows. Binds 5S rRNA, forms part of the central protuberance of the 50S subunit. In Heterosigma akashiwo (strain NIES-293 / 8280G21-1), this protein is Large ribosomal subunit protein uL5c (rpl5).